The primary structure comprises 346 residues: Ribosomal RNA small subunit methyltransferase H (346 aa).

Residues 47–49, aspartate 65, phenylalanine 92, aspartate 113, and glutamine 120 contribute to the S-adenosyl-L-methionine site; that span reads GGY. Residues 294–346 are disordered; it reads AVEPGSDEVAGNPRARSAKLRAAERTDAPAHPDGDLAGLLPADLSQRRGRRRS. The span at 314–327 shows a compositional bias: basic and acidic residues; that stretch reads RAAERTDAPAHPDG. Low complexity predominate over residues 328–337; sequence DLAGLLPADL.

Belongs to the methyltransferase superfamily. RsmH family.

It localises to the cytoplasm. It catalyses the reaction cytidine(1402) in 16S rRNA + S-adenosyl-L-methionine = N(4)-methylcytidine(1402) in 16S rRNA + S-adenosyl-L-homocysteine + H(+). Specifically methylates the N4 position of cytidine in position 1402 (C1402) of 16S rRNA. This is Ribosomal RNA small subunit methyltransferase H from Azorhizobium caulinodans (strain ATCC 43989 / DSM 5975 / JCM 20966 / LMG 6465 / NBRC 14845 / NCIMB 13405 / ORS 571).